Here is a 160-residue protein sequence, read N- to C-terminus: Lipoprotein signal peptidase (160 aa).

3 helical membrane passes run 6-26 (VWSS…IKYL), 58-78 (LAWL…AFVL), and 95-115 (FALV…HGYV). Active-site residues include D117 and D135. A helical transmembrane segment spans residues 127-147 (SFAVFNLADAFITIGAGLIIL).

The protein belongs to the peptidase A8 family.

It is found in the cell inner membrane. The enzyme catalyses Release of signal peptides from bacterial membrane prolipoproteins. Hydrolyzes -Xaa-Yaa-Zaa-|-(S,diacylglyceryl)Cys-, in which Xaa is hydrophobic (preferably Leu), and Yaa (Ala or Ser) and Zaa (Gly or Ala) have small, neutral side chains.. It participates in protein modification; lipoprotein biosynthesis (signal peptide cleavage). In terms of biological role, this protein specifically catalyzes the removal of signal peptides from prolipoproteins. The polypeptide is Lipoprotein signal peptidase (Brucella abortus (strain S19)).